A 968-amino-acid polypeptide reads, in one-letter code: RNA polymerase-associated protein RapA (968 aa).

One can recognise a Helicase ATP-binding domain in the interval 164-334 (DVGRRHAPRV…FARLRLLDPN (171 aa)). 177 to 184 (DEVGLGKT) contacts ATP. The DEAH box motif lies at 280–283 (DEAH). The Helicase C-terminal domain maps to 490-662 (RVEWLMGYLT…YLASPDQTEG (173 aa)).

This sequence belongs to the SNF2/RAD54 helicase family. RapA subfamily. Interacts with the RNAP. Has a higher affinity for the core RNAP than for the holoenzyme. Its ATPase activity is stimulated by binding to RNAP.

In terms of biological role, transcription regulator that activates transcription by stimulating RNA polymerase (RNAP) recycling in case of stress conditions such as supercoiled DNA or high salt concentrations. Probably acts by releasing the RNAP, when it is trapped or immobilized on tightly supercoiled DNA. Does not activate transcription on linear DNA. Probably not involved in DNA repair. This Escherichia fergusonii (strain ATCC 35469 / DSM 13698 / CCUG 18766 / IAM 14443 / JCM 21226 / LMG 7866 / NBRC 102419 / NCTC 12128 / CDC 0568-73) protein is RNA polymerase-associated protein RapA.